The sequence spans 315 residues: Tyrosine--tRNA ligase (315 aa).

L-tyrosine is bound at residue Tyr-32. The short motif at 37 to 45 is the 'HIGH' region element; that stretch reads PSGEIHLGH. Residues Tyr-152, Gln-156, Asp-159, and Gln-174 each coordinate L-tyrosine. Positions 208–212 match the 'KMSKS' region motif; that stretch reads KMSSS. Ser-211 provides a ligand contact to ATP.

This sequence belongs to the class-I aminoacyl-tRNA synthetase family. TyrS type 3 subfamily. In terms of assembly, homodimer.

The protein resides in the cytoplasm. The catalysed reaction is tRNA(Tyr) + L-tyrosine + ATP = L-tyrosyl-tRNA(Tyr) + AMP + diphosphate + H(+). In terms of biological role, catalyzes the attachment of tyrosine to tRNA(Tyr) in a two-step reaction: tyrosine is first activated by ATP to form Tyr-AMP and then transferred to the acceptor end of tRNA(Tyr). The sequence is that of Tyrosine--tRNA ligase from Methanoculleus marisnigri (strain ATCC 35101 / DSM 1498 / JR1).